We begin with the raw amino-acid sequence, 256 residues long: Myeloblastin (256 aa).

The first 25 residues, 1 to 25 (MAHRPPSPALASVLLALLLSGAARA), serve as a signal peptide directing secretion. Residues 26–27 (AE) constitute a propeptide that is removed on maturation. Residues 28–248 (IVGGHEAQPH…YVDWIRSTLR (221 aa)) enclose the Peptidase S1 domain. C56 and C72 are joined by a disulfide. Catalysis depends on charge relay system residues H71 and D118. N129 and N174 each carry an N-linked (GlcNAc...) asparagine glycan. Disulfide bonds link C152–C209, C182–C188, and C199–C224. S203 acts as the Charge relay system in catalysis. Positions 249–256 (RVEAKGRP) are excised as a propeptide.

It belongs to the peptidase S1 family. Elastase subfamily. As to quaternary structure, may form dimers. Interacts with CD177; the interaction tethers PRTN3 to the cell surface; the interaction is direct. Interacts with SERPINB1. Interacts with ADGRG3. As to expression, expressed in polymorphonuclear leukocytes (at protein level). Expressed in neutrophils (at protein level). Expressed in differentiating neutrophils.

The protein localises to the cytoplasmic granule. Its subcellular location is the secreted. It is found in the cell membrane. It localises to the membrane raft. The catalysed reaction is Hydrolysis of proteins, including elastin, by preferential cleavage: -Ala-|-Xaa- &gt; -Val-|-Xaa-.. Its activity is regulated as follows. Inhibited by phenylmethanesulfonyl fluoride (PMSF) and diisopropyl fluorophosphate (DFP). Serine protease that degrades elastin, fibronectin, laminin, vitronectin, and collagen types I, III, and IV (in vitro). By cleaving and activating receptor F2RL1/PAR-2, enhances endothelial cell barrier function and thus vascular integrity during neutrophil transendothelial migration. Plays a role in neutrophil transendothelial migration, probably when associated with CD177. Triggers inflammatory processes in neutrophils by interacting with ADGRG3 upstream of F2RL1/PAR2 activation. This is Myeloblastin (PRTN3) from Homo sapiens (Human).